The primary structure comprises 306 residues: MSAVISLPDPQPRAARDPRVAEREQHKLAKRLRRQVGEAIADFGMIEAGDKVMVCLSGGKDSYTLLDVLLQLQKKAPVPFELVAVNLDQKQPDFPEHVLPEYLAGLGVPYHIIEQDTYSVVSRVIPEGKTMCSLCSRLRRGALYNYAETHGFTKIALGHHRDDMVATFFMNLFHHAKLSGMPPKLRSDDGKHVVIRPLAYVRESDIVDYAQARQFPIIPCNLCGSQENLQRRQVGLMLKQWEKDHPGRIEQIARAMGEVRPSQLADTTLFDFMALGRRDDAPLPDAHAWLAGSPADADADPETPTV.

Residues 1-25 (MSAVISLPDPQPRAARDPRVAEREQ) are disordered. Basic and acidic residues predominate over residues 14 to 25 (AARDPRVAEREQ). The PP-loop motif motif lies at 57-62 (SGGKDS). Residues Cys-132, Cys-135, and Cys-223 each coordinate [4Fe-4S] cluster. Positions 286-306 (AHAWLAGSPADADADPETPTV) are disordered. Residues 297-306 (ADADPETPTV) show a composition bias toward acidic residues.

It belongs to the TtcA family. Homodimer. The cofactor is Mg(2+). [4Fe-4S] cluster is required as a cofactor.

The protein resides in the cytoplasm. It carries out the reaction cytidine(32) in tRNA + S-sulfanyl-L-cysteinyl-[cysteine desulfurase] + AH2 + ATP = 2-thiocytidine(32) in tRNA + L-cysteinyl-[cysteine desulfurase] + A + AMP + diphosphate + H(+). The protein operates within tRNA modification. In terms of biological role, catalyzes the ATP-dependent 2-thiolation of cytidine in position 32 of tRNA, to form 2-thiocytidine (s(2)C32). The sulfur atoms are provided by the cysteine/cysteine desulfurase (IscS) system. The chain is tRNA-cytidine(32) 2-sulfurtransferase from Stenotrophomonas maltophilia (strain K279a).